A 368-amino-acid chain; its full sequence is Aminomethyltransferase (368 aa).

This sequence belongs to the GcvT family. The glycine cleavage system is composed of four proteins: P, T, L and H.

The enzyme catalyses N(6)-[(R)-S(8)-aminomethyldihydrolipoyl]-L-lysyl-[protein] + (6S)-5,6,7,8-tetrahydrofolate = N(6)-[(R)-dihydrolipoyl]-L-lysyl-[protein] + (6R)-5,10-methylene-5,6,7,8-tetrahydrofolate + NH4(+). In terms of biological role, the glycine cleavage system catalyzes the degradation of glycine. The polypeptide is Aminomethyltransferase (Xylella fastidiosa (strain 9a5c)).